A 465-amino-acid chain; its full sequence is Probable zinc metalloprotease PTT_17836 (465 aa).

The signal sequence occupies residues 1 to 20; it reads MRSASTLAVCAATLLQIACS. N-linked (GlcNAc...) asparagine glycosylation occurs at asparagine 140. Zn(2+) is bound by residues histidine 163, aspartate 183, and glutamate 216. The N-linked (GlcNAc...) asparagine glycan is linked to asparagine 231. Aspartate 243 serves as a coordination point for Zn(2+). N-linked (GlcNAc...) asparagine glycans are attached at residues asparagine 272, asparagine 330, asparagine 378, asparagine 384, asparagine 421, and asparagine 426. A Fibronectin type-III domain is found at 371–464; sequence APTNVGVNTT…LPFPFGCARN (94 aa).

It belongs to the peptidase M28 family. M28B subfamily. Zn(2+) is required as a cofactor.

The protein localises to the secreted. This Pyrenophora teres f. teres (strain 0-1) (Barley net blotch fungus) protein is Probable zinc metalloprotease PTT_17836.